Here is a 65-residue protein sequence, read N- to C-terminus: Hainantoxin-X-3 (65 aa).

Residues 1–20 (MNMKILVLVAVLCLVVSTHA) form the signal peptide. Residues 21–37 (ERHSKTDMEDSPMIQER) constitute a propeptide that is removed on maturation. Disulfide bonds link C46-C59 and C55-C64.

Belongs to the neurotoxin 36 family. 02 subfamily. Expressed by the venom gland.

It localises to the secreted. In terms of biological role, reversibly blocks N-type calcium channels (Cav2.2/CACNA1B) in rat dorsal root ganglion cells. Elicits no toxic symptoms in either vertebrates or invertebrates during a period of 48 hours post-injection, when it was assayed in vivo by direct injection into mice and cockroaches. The sequence is that of Hainantoxin-X-3 from Cyriopagopus hainanus (Chinese bird spider).